The following is a 218-amino-acid chain: Phosphatidylserine decarboxylase proenzyme (218 aa).

Catalysis depends on Ser-183, which acts as the Schiff-base intermediate with substrate; via pyruvic acid. Position 183 is a pyruvic acid (Ser); by autocatalysis (Ser-183).

Belongs to the phosphatidylserine decarboxylase family. PSD-A subfamily. Heterodimer of a large membrane-associated beta subunit and a small pyruvoyl-containing alpha subunit. It depends on pyruvate as a cofactor. Is synthesized initially as an inactive proenzyme. Formation of the active enzyme involves a self-maturation process in which the active site pyruvoyl group is generated from an internal serine residue via an autocatalytic post-translational modification. Two non-identical subunits are generated from the proenzyme in this reaction, and the pyruvate is formed at the N-terminus of the alpha chain, which is derived from the carboxyl end of the proenzyme. The post-translation cleavage follows an unusual pathway, termed non-hydrolytic serinolysis, in which the side chain hydroxyl group of the serine supplies its oxygen atom to form the C-terminus of the beta chain, while the remainder of the serine residue undergoes an oxidative deamination to produce ammonia and the pyruvoyl prosthetic group on the alpha chain.

The protein localises to the cell membrane. It carries out the reaction a 1,2-diacyl-sn-glycero-3-phospho-L-serine + H(+) = a 1,2-diacyl-sn-glycero-3-phosphoethanolamine + CO2. The protein operates within phospholipid metabolism; phosphatidylethanolamine biosynthesis; phosphatidylethanolamine from CDP-diacylglycerol: step 2/2. Its function is as follows. Catalyzes the formation of phosphatidylethanolamine (PtdEtn) from phosphatidylserine (PtdSer). The polypeptide is Phosphatidylserine decarboxylase proenzyme (Magnetococcus marinus (strain ATCC BAA-1437 / JCM 17883 / MC-1)).